We begin with the raw amino-acid sequence, 549 residues long: Hydroxylamine reductase (549 aa).

The [4Fe-4S] cluster site is built by Cys5, Cys8, Cys17, and Cys23. 8 residues coordinate hybrid [4Fe-2O-2S] cluster: His243, Glu267, Cys311, Cys403, Cys431, Cys456, Glu491, and Lys493. Position 403 is a cysteine persulfide (Cys403).

It belongs to the HCP family. The cofactor is [4Fe-4S] cluster. Hybrid [4Fe-2O-2S] cluster serves as cofactor.

The protein localises to the cytoplasm. The catalysed reaction is A + NH4(+) + H2O = hydroxylamine + AH2 + H(+). Functionally, catalyzes the reduction of hydroxylamine to form NH(3) and H(2)O. This is Hydroxylamine reductase from Desulfitobacterium hafniense (strain Y51).